A 179-amino-acid chain; its full sequence is Bifunctional protein PyrR (179 aa).

A PRPP-binding motif is present at residues 100 to 112 (VILVDDVLFTGRT).

The protein belongs to the purine/pyrimidine phosphoribosyltransferase family. PyrR subfamily. As to quaternary structure, homodimer and homohexamer; in equilibrium.

It carries out the reaction UMP + diphosphate = 5-phospho-alpha-D-ribose 1-diphosphate + uracil. In terms of biological role, regulates transcriptional attenuation of the pyrimidine nucleotide (pyr) operon by binding in a uridine-dependent manner to specific sites on pyr mRNA. This disrupts an antiterminator hairpin in the RNA and favors formation of a downstream transcription terminator, leading to a reduced expression of downstream genes. Also displays a weak uracil phosphoribosyltransferase activity which is not physiologically significant. The sequence is that of Bifunctional protein PyrR from Geobacillus sp. (strain WCH70).